The chain runs to 562 residues: Glutamate--tRNA ligase (562 aa).

A 'HIGH' region motif is present at residues 104–114 (PNPDFYMTLGN).

Belongs to the class-I aminoacyl-tRNA synthetase family. Glutamate--tRNA ligase type 2 subfamily.

The protein localises to the cytoplasm. The catalysed reaction is tRNA(Glu) + L-glutamate + ATP = L-glutamyl-tRNA(Glu) + AMP + diphosphate. Functionally, catalyzes the attachment of glutamate to tRNA(Glu) in a two-step reaction: glutamate is first activated by ATP to form Glu-AMP and then transferred to the acceptor end of tRNA(Glu). In Ignicoccus hospitalis (strain KIN4/I / DSM 18386 / JCM 14125), this protein is Glutamate--tRNA ligase.